A 206-amino-acid polypeptide reads, in one-letter code: Putative 3-methyladenine DNA glycosylase (206 aa).

It belongs to the DNA glycosylase MPG family.

This Salinibacter ruber (strain DSM 13855 / M31) protein is Putative 3-methyladenine DNA glycosylase.